Reading from the N-terminus, the 160-residue chain is Ribosomal RNA large subunit methyltransferase H (160 aa).

S-adenosyl-L-methionine is bound by residues Leu-76, Gly-108, and 127-132 (LGKLTW).

It belongs to the RNA methyltransferase RlmH family. In terms of assembly, homodimer.

The protein resides in the cytoplasm. The enzyme catalyses pseudouridine(1915) in 23S rRNA + S-adenosyl-L-methionine = N(3)-methylpseudouridine(1915) in 23S rRNA + S-adenosyl-L-homocysteine + H(+). In terms of biological role, specifically methylates the pseudouridine at position 1915 (m3Psi1915) in 23S rRNA. In Agrobacterium fabrum (strain C58 / ATCC 33970) (Agrobacterium tumefaciens (strain C58)), this protein is Ribosomal RNA large subunit methyltransferase H.